The primary structure comprises 497 residues: Cytosol aminopeptidase (497 aa).

The Mn(2+) site is built by Lys-267 and Asp-272. Lys-279 is a catalytic residue. Positions 290, 349, and 351 each coordinate Mn(2+). Arg-353 is an active-site residue.

The protein belongs to the peptidase M17 family. Requires Mn(2+) as cofactor.

Its subcellular location is the cytoplasm. It carries out the reaction Release of an N-terminal amino acid, Xaa-|-Yaa-, in which Xaa is preferably Leu, but may be other amino acids including Pro although not Arg or Lys, and Yaa may be Pro. Amino acid amides and methyl esters are also readily hydrolyzed, but rates on arylamides are exceedingly low.. It catalyses the reaction Release of an N-terminal amino acid, preferentially leucine, but not glutamic or aspartic acids.. Its function is as follows. Presumably involved in the processing and regular turnover of intracellular proteins. Catalyzes the removal of unsubstituted N-terminal amino acids from various peptides. The sequence is that of Cytosol aminopeptidase (pepA) from Pseudomonas putida (Arthrobacter siderocapsulatus).